The sequence spans 438 residues: Thymidine phosphorylase (438 aa).

The protein belongs to the thymidine/pyrimidine-nucleoside phosphorylase family. Homodimer.

The catalysed reaction is thymidine + phosphate = 2-deoxy-alpha-D-ribose 1-phosphate + thymine. It functions in the pathway pyrimidine metabolism; dTMP biosynthesis via salvage pathway; dTMP from thymine: step 1/2. The enzymes which catalyze the reversible phosphorolysis of pyrimidine nucleosides are involved in the degradation of these compounds and in their utilization as carbon and energy sources, or in the rescue of pyrimidine bases for nucleotide synthesis. The sequence is that of Thymidine phosphorylase from Burkholderia orbicola (strain AU 1054).